The following is a 348-amino-acid chain: Dihydroorotase (348 aa).

Residues His13 and His15 each contribute to the Zn(2+) site. Residues 15–17 and Asn41 contribute to the substrate site; that span reads HLR. Residues Lys99, His136, and His174 each contribute to the Zn(2+) site. N6-carboxylysine is present on Lys99. His136 provides a ligand contact to substrate. Substrate is bound at residue Leu219. Residue Asp247 coordinates Zn(2+). The active site involves Asp247. Substrate is bound by residues His251 and Ala263.

Belongs to the metallo-dependent hydrolases superfamily. DHOase family. Class II DHOase subfamily. As to quaternary structure, homodimer. Requires Zn(2+) as cofactor.

It catalyses the reaction (S)-dihydroorotate + H2O = N-carbamoyl-L-aspartate + H(+). It participates in pyrimidine metabolism; UMP biosynthesis via de novo pathway; (S)-dihydroorotate from bicarbonate: step 3/3. Its function is as follows. Catalyzes the reversible cyclization of carbamoyl aspartate to dihydroorotate. The chain is Dihydroorotase from Rhizobium etli (strain ATCC 51251 / DSM 11541 / JCM 21823 / NBRC 15573 / CFN 42).